Reading from the N-terminus, the 192-residue chain is Phosphoheptose isomerase (192 aa).

The 158-residue stretch at 35 to 192 folds into the SIS domain; it reads LIETLENQGK…CIERHFANKN (158 aa). Residue 50–52 coordinates substrate; the sequence is NGG. Zn(2+) is bound by residues H59 and E63. Residues E63, 92 to 93, 118 to 120, S123, and Q170 each bind substrate; these read ND and STS. Zn(2+)-binding residues include Q170 and H178.

It belongs to the SIS family. GmhA subfamily. In terms of assembly, homotetramer. The cofactor is Zn(2+).

It localises to the cytoplasm. It carries out the reaction 2 D-sedoheptulose 7-phosphate = D-glycero-alpha-D-manno-heptose 7-phosphate + D-glycero-beta-D-manno-heptose 7-phosphate. It functions in the pathway carbohydrate biosynthesis; D-glycero-D-manno-heptose 7-phosphate biosynthesis; D-glycero-alpha-D-manno-heptose 7-phosphate and D-glycero-beta-D-manno-heptose 7-phosphate from sedoheptulose 7-phosphate: step 1/1. Its function is as follows. Catalyzes the isomerization of sedoheptulose 7-phosphate in D-glycero-D-manno-heptose 7-phosphate. This chain is Phosphoheptose isomerase, found in Helicobacter pylori (strain Shi470).